The chain runs to 240 residues: Sugar fermentation stimulation protein homolog (240 aa).

Belongs to the SfsA family.

This chain is Sugar fermentation stimulation protein homolog, found in Saccharolobus islandicus (strain L.S.2.15 / Lassen #1) (Sulfolobus islandicus).